The following is a 626-amino-acid chain: Carnitine O-acetyltransferase (626 aa).

Residue lysine 93 is modified to N6-succinyllysine. Lysine 261 carries the N6-acetyllysine; alternate modification. Lysine 261 carries the post-translational modification N6-succinyllysine; alternate. Lysine 268 carries the N6-acetyllysine modification. The Proton acceptor role is filled by histidine 343. CoA contacts are provided by residues lysine 419 and lysine 423–aspartate 430. (R)-carnitine is bound by residues tyrosine 452 and serine 454. Serine 456 is a binding site for CoA. Threonine 465 serves as a coordination point for (R)-carnitine. Residues arginine 504 and glutamine 555 each coordinate CoA. Positions alanine 624 to leucine 626 match the Microbody targeting signal motif.

Belongs to the carnitine/choline acetyltransferase family. As to quaternary structure, monomer. In terms of tissue distribution, mostly in skeletal muscle, less in heart, liver and pancreas, only weakly detectable in brain, placenta, lung and kidney.

It is found in the endoplasmic reticulum. It localises to the peroxisome. The protein resides in the mitochondrion inner membrane. The protein localises to the mitochondrion. The enzyme catalyses (R)-carnitine + acetyl-CoA = O-acetyl-(R)-carnitine + CoA. The catalysed reaction is propanoyl-CoA + (R)-carnitine = O-propanoyl-(R)-carnitine + CoA. It carries out the reaction butanoyl-CoA + (R)-carnitine = O-butanoyl-(R)-carnitine + CoA. It catalyses the reaction hexanoyl-CoA + (R)-carnitine = O-hexanoyl-(R)-carnitine + CoA. The enzyme catalyses octanoyl-CoA + (R)-carnitine = O-octanoyl-(R)-carnitine + CoA. The catalysed reaction is decanoyl-CoA + (R)-carnitine = O-decanoyl-(R)-carnitine + CoA. It carries out the reaction 3-methylbutanoyl-CoA + (R)-carnitine = O-3-methylbutanoyl-(R)-carnitine + CoA. It catalyses the reaction 2-methylpropanoyl-CoA + (R)-carnitine = O-isobutanoyl-(R)-carnitine + CoA. The enzyme catalyses 2-methylbutanoyl-CoA + (R)-carnitine = O-2-methylbutanoyl-(R)-carnitine + CoA. The catalysed reaction is acetoacetyl-CoA + (R)-carnitine = O-3-oxobutanoyl-(R)-carnitine + CoA. It carries out the reaction 3-hydroxybutanoyl-CoA + (R)-carnitine = O-3-hydroxybutanoyl-(R)-carnitine + CoA. It catalyses the reaction 4,8-dimethylnonanoyl-CoA + (R)-carnitine = O-4,8-dimethylnonanoyl-(R)-carnitine + CoA. The enzyme catalyses 2,6-dimethylheptanoyl-CoA + (R)-carnitine = O-2,6-dimethylheptanoyl-(R)-carnitine + CoA. Catalyzes the reversible transfer of acyl groups from carnitine to coenzyme A (CoA) and regulates the acyl-CoA/CoA ratio. Also plays a crucial role in the transport of fatty acids for beta-oxidation. Responsible for the synthesis of short- and branched-chain acylcarnitines. Active towards some branched-chain amino acid oxidation pathway (BCAAO) intermediates. Trans-2-enoyl-CoAs and 2-methylacyl-CoAs are poor substrates. The protein is Carnitine O-acetyltransferase of Homo sapiens (Human).